A 410-amino-acid polypeptide reads, in one-letter code: Kynureninase (410 aa).

Pyridoxal 5'-phosphate-binding positions include Thr108, Ser109, 135-138, Thr176, Asp205, His208, and Tyr230; that span reads FPTD. Lys231 is modified (N6-(pyridoxal phosphate)lysine). 2 residues coordinate pyridoxal 5'-phosphate: Trp260 and Thr286.

It belongs to the kynureninase family. In terms of assembly, homodimer. Pyridoxal 5'-phosphate is required as a cofactor.

The enzyme catalyses L-kynurenine + H2O = anthranilate + L-alanine + H(+). The catalysed reaction is 3-hydroxy-L-kynurenine + H2O = 3-hydroxyanthranilate + L-alanine + H(+). It participates in amino-acid degradation; L-kynurenine degradation; L-alanine and anthranilate from L-kynurenine: step 1/1. The protein operates within cofactor biosynthesis; NAD(+) biosynthesis; quinolinate from L-kynurenine: step 2/3. Its function is as follows. Catalyzes the cleavage of L-kynurenine (L-Kyn) and L-3-hydroxykynurenine (L-3OHKyn) into anthranilic acid (AA) and 3-hydroxyanthranilic acid (3-OHAA), respectively. In Deinococcus radiodurans (strain ATCC 13939 / DSM 20539 / JCM 16871 / CCUG 27074 / LMG 4051 / NBRC 15346 / NCIMB 9279 / VKM B-1422 / R1), this protein is Kynureninase.